We begin with the raw amino-acid sequence, 390 residues long: Succinate--CoA ligase [ADP-forming] subunit beta (390 aa).

In terms of domain architecture, ATP-grasp spans 9–244 (KEILKRYGVN…ETQTDTSENE (236 aa)). ATP contacts are provided by residues Lys-46, 53–55 (GRG), Glu-99, Leu-102, and Glu-107. Residues Asn-199 and Asp-213 each contribute to the Mg(2+) site. Substrate is bound by residues Asn-264 and 321–323 (GIV).

This sequence belongs to the succinate/malate CoA ligase beta subunit family. In terms of assembly, heterotetramer of two alpha and two beta subunits. Mg(2+) serves as cofactor.

It carries out the reaction succinate + ATP + CoA = succinyl-CoA + ADP + phosphate. It catalyses the reaction GTP + succinate + CoA = succinyl-CoA + GDP + phosphate. The protein operates within carbohydrate metabolism; tricarboxylic acid cycle; succinate from succinyl-CoA (ligase route): step 1/1. Functionally, succinyl-CoA synthetase functions in the citric acid cycle (TCA), coupling the hydrolysis of succinyl-CoA to the synthesis of either ATP or GTP and thus represents the only step of substrate-level phosphorylation in the TCA. The beta subunit provides nucleotide specificity of the enzyme and binds the substrate succinate, while the binding sites for coenzyme A and phosphate are found in the alpha subunit. The chain is Succinate--CoA ligase [ADP-forming] subunit beta from Campylobacter curvus (strain 525.92).